Reading from the N-terminus, the 485-residue chain is MPQLRDSGTRSLHATEPVPSAEMDGFCRIFGVETEYGVAVTGAERPVDAGQVAMTMFQPIVSRSRSTNTYLANGSRLYLDVGSHPEYATAEARDPREALGQDLAGEHVMRNLALKAQRKLRESYSEHATIHVFKNNVDSAGHAFGCHENYLVRRFVPLETIEHQLLPFLITRQLYTGAGRMTPDGFQITQRADFLDEAVSSATTRSRPMVNTRDEPHADPDSFRRLHVIIGDSNRSQWSTWMKLAVTHLVLCAIEDAFRLGTPSGFEHCAFADPAAANRTVSRFLDDPHAELTLESGESVSALGLQRRYYAAVKAFIETHGDALASSLPATTIVTIMGEWSRVLDALERGAYDALADRVDWAAKKRLFDALKRRRPDVTFAQMEQLELDYHDIANGRLYGSLTSRNQMRELLTGDDVEYAVHNPPTDTRAALRGRFVDAALNVGAQFSADWTHLTLTAPERREAILLDPFEAEPTPEFEQLMEAL.

Glutamate 33 provides a ligand contact to Mg(2+). ATP is bound at residue arginine 76. Tyrosine 78 contacts Mg(2+). Aspartate 80 (proton acceptor) is an active-site residue. Glutamate 86 contributes to the Mg(2+) binding site. Residues threonine 89 and tryptophan 451 each coordinate ATP.

The protein belongs to the Pup ligase/Pup deamidase family. Pup-conjugating enzyme subfamily.

It carries out the reaction ATP + [prokaryotic ubiquitin-like protein]-L-glutamate + [protein]-L-lysine = ADP + phosphate + N(6)-([prokaryotic ubiquitin-like protein]-gamma-L-glutamyl)-[protein]-L-lysine.. It participates in protein degradation; proteasomal Pup-dependent pathway. The protein operates within protein modification; protein pupylation. Its function is as follows. Catalyzes the covalent attachment of the prokaryotic ubiquitin-like protein modifier Pup to the proteasomal substrate proteins, thereby targeting them for proteasomal degradation. This tagging system is termed pupylation. The ligation reaction involves the side-chain carboxylate of the C-terminal glutamate of Pup and the side-chain amino group of a substrate lysine. This chain is Pup--protein ligase, found in Bifidobacterium longum subsp. infantis (strain ATCC 15697 / DSM 20088 / JCM 1222 / NCTC 11817 / S12).